The following is a 381-amino-acid chain: Creatine kinase M-type (381 aa).

Residues Lys11–Gly98 enclose the Phosphagen kinase N-terminal domain. In terms of domain architecture, Phosphagen kinase C-terminal spans Tyr125–Leu367. Ser128 to Arg132 contributes to the ATP binding site. Position 164 is a phosphoserine (Ser164). Residue Thr166 is modified to Phosphothreonine. Residue Ser178 is modified to Phosphoserine. At Thr180 the chain carries Phosphothreonine. His191 is an ATP binding site. Ser199 carries the post-translational modification Phosphoserine. The ATP site is built by Arg236 and Arg292. Thr313 and Thr322 each carry phosphothreonine. Arg320–Val325 contacts ATP. Ser372 carries the phosphoserine modification.

Belongs to the ATP:guanido phosphotransferase family. As to quaternary structure, dimer of identical or non-identical chains, which can be either B (brain type) or M (muscle type). With MM being the major form in skeletal muscle and myocardium, MB existing in myocardium, and BB existing in many tissues, especially brain.

The enzyme catalyses creatine + ATP = N-phosphocreatine + ADP + H(+). Functionally, reversibly catalyzes the transfer of phosphate between ATP and various phosphogens (e.g. creatine phosphate). Creatine kinase isoenzymes play a central role in energy transduction in tissues with large, fluctuating energy demands, such as skeletal muscle, heart, brain and spermatozoa. The protein is Creatine kinase M-type (CKM) of Oryctolagus cuniculus (Rabbit).